A 346-amino-acid polypeptide reads, in one-letter code: Sulfate/thiosulfate import ATP-binding protein CysA 1 (346 aa).

The 235-residue stretch at 3–237 (VKVSGITKQF…PNSPFVFSFI (235 aa)) folds into the ABC transporter domain. 35–42 (GPSGSGKT) provides a ligand contact to ATP.

This sequence belongs to the ABC transporter superfamily. Sulfate/tungstate importer (TC 3.A.1.6) family. In terms of assembly, the complex is composed of two ATP-binding proteins (CysA), two transmembrane proteins (CysT and CysW) and a solute-binding protein (CysP).

Its subcellular location is the cell inner membrane. The enzyme catalyses sulfate(out) + ATP + H2O = sulfate(in) + ADP + phosphate + H(+). The catalysed reaction is thiosulfate(out) + ATP + H2O = thiosulfate(in) + ADP + phosphate + H(+). In terms of biological role, part of the ABC transporter complex CysAWTP involved in sulfate/thiosulfate import. Responsible for energy coupling to the transport system. This Agrobacterium fabrum (strain C58 / ATCC 33970) (Agrobacterium tumefaciens (strain C58)) protein is Sulfate/thiosulfate import ATP-binding protein CysA 1.